A 244-amino-acid polypeptide reads, in one-letter code: NAD(P)H-quinone oxidoreductase subunit K (244 aa).

C60, C61, C125, and C156 together coordinate [4Fe-4S] cluster. The tract at residues 213-244 (TSANSIPSSKKEKITELPDNNEKAEIIDTLEN) is disordered. Residues 221 to 238 (SKKEKITELPDNNEKAEI) show a composition bias toward basic and acidic residues.

The protein belongs to the complex I 20 kDa subunit family. In terms of assembly, NDH-1 can be composed of about 15 different subunits; different subcomplexes with different compositions have been identified which probably have different functions. It depends on [4Fe-4S] cluster as a cofactor.

It is found in the cellular thylakoid membrane. It carries out the reaction a plastoquinone + NADH + (n+1) H(+)(in) = a plastoquinol + NAD(+) + n H(+)(out). The catalysed reaction is a plastoquinone + NADPH + (n+1) H(+)(in) = a plastoquinol + NADP(+) + n H(+)(out). Functionally, NDH-1 shuttles electrons from an unknown electron donor, via FMN and iron-sulfur (Fe-S) centers, to quinones in the respiratory and/or the photosynthetic chain. The immediate electron acceptor for the enzyme in this species is believed to be plastoquinone. Couples the redox reaction to proton translocation, and thus conserves the redox energy in a proton gradient. Cyanobacterial NDH-1 also plays a role in inorganic carbon-concentration. In Prochlorococcus marinus (strain MIT 9301), this protein is NAD(P)H-quinone oxidoreductase subunit K.